The following is a 345-amino-acid chain: Meiotic recombination protein rec12 (345 aa).

Residues 5–137 (DKKKVVRSWI…LNVEASAKGL (133 aa)) form the Topo IIA-type catalytic domain. Tyr-98 functions as the O-(5'-phospho-DNA)-tyrosine intermediate in the catalytic mechanism. The Mg(2+) site is built by Glu-179 and Asp-229.

This sequence belongs to the TOP6A family. As to quaternary structure, component of the DSB catalytic core (DSBC) complex, composed of at least rec12, rec6 and rec14. The complex interacts with mde2. Requires Mg(2+) as cofactor.

Its subcellular location is the cytoplasm. The protein resides in the nucleus. It carries out the reaction ATP-dependent breakage, passage and rejoining of double-stranded DNA.. Functionally, required for formation of the double-strand breaks (DSBs) that initiate meiotic recombination. Required for crossover recombination and chiasmatic segregation of chromosomes during meiosis I. Also involved in the faithful equational segregation of chromosomes during meiosis II. This Schizosaccharomyces pombe (strain 972 / ATCC 24843) (Fission yeast) protein is Meiotic recombination protein rec12.